A 148-amino-acid chain; its full sequence is Small ribosomal subunit protein uS13 (148 aa).

The protein belongs to the universal ribosomal protein uS13 family. In terms of assembly, part of the 30S ribosomal subunit. Forms a loose heterodimer with protein S19. Forms two bridges to the 50S subunit in the 70S ribosome.

Located at the top of the head of the 30S subunit, it contacts several helices of the 16S rRNA. In the 70S ribosome it contacts the 23S rRNA (bridge B1a) and protein L5 of the 50S subunit (bridge B1b), connecting the 2 subunits; these bridges are implicated in subunit movement. This chain is Small ribosomal subunit protein uS13, found in Pyrococcus abyssi (strain GE5 / Orsay).